The primary structure comprises 301 residues: GTPase Era (301 aa).

Residues 6–173 (KSGFVAIVGR…LEQTNANLEI (168 aa)) form the Era-type G domain. The segment at 14–21 (GRPNVGKS) is G1. 14 to 21 (GRPNVGKS) contacts GTP. The segment at 40 to 44 (QTTRN) is G2. The G3 stretch occupies residues 61-64 (DTPG). GTP contacts are provided by residues 61-65 (DTPGI) and 123-126 (NKID). Residues 123–126 (NKID) are G4. Positions 152–154 (ISA) are G5. A KH type-2 domain is found at 204–282 (TREEVPHSVA…FLEIWVKVQK (79 aa)).

It belongs to the TRAFAC class TrmE-Era-EngA-EngB-Septin-like GTPase superfamily. Era GTPase family. Monomer.

The protein localises to the cytoplasm. It localises to the cell membrane. An essential GTPase that binds both GDP and GTP, with rapid nucleotide exchange. Plays a role in 16S rRNA processing and 30S ribosomal subunit biogenesis and possibly also in cell cycle regulation and energy metabolism. This is GTPase Era from Listeria welshimeri serovar 6b (strain ATCC 35897 / DSM 20650 / CCUG 15529 / CIP 8149 / NCTC 11857 / SLCC 5334 / V8).